The chain runs to 955 residues: Kinesin-like protein NACK2 (955 aa).

Positions 36 to 357 (KILVTIRVRP…LCFATSAKEV (322 aa)) constitute a Kinesin motor domain. 120 to 127 (GQTSSGKT) contacts ATP. 2 coiled-coil regions span residues 366–443 (VVAE…LKGS) and 566–604 (KASL…VMHL).

The protein belongs to the TRAFAC class myosin-kinesin ATPase superfamily. Kinesin family. KIN-7 subfamily.

The protein resides in the cytoplasm. The protein localises to the nucleus. It localises to the cytoskeleton. Its subcellular location is the phragmoplast. Its function is as follows. Probable plus end-directed motor protein that may function in the NACK-PQR (NPK1-NQK1/MEK1-NRK1) MAP kinase signaling pathway, which is essential for somatic cell cytokinesis, especially for the cell-plate formation and its expansion. May regulate the activity and the localization of NPK1, probably by association through the non-catalytic region of the kinase. The sequence is that of Kinesin-like protein NACK2 (NACK2) from Nicotiana tabacum (Common tobacco).